Reading from the N-terminus, the 242-residue chain is DNA repair protein RecO (242 aa).

Belongs to the RecO family. As to quaternary structure, monomer.

In terms of biological role, involved in DNA repair and RecF pathway recombination. This chain is DNA repair protein RecO, found in Salmonella dublin (strain CT_02021853).